A 60-amino-acid polypeptide reads, in one-letter code: Metallothionein A (60 aa).

Residues 1–28 form a beta region; sequence MDPCQCSKSGTCNCGGSCTCTNCSCKSC. C4, C6, C12, C14, C18, C20, C23, C25, C28, C32, C33, C35, C36, C40, C43, C47, C49, C54, C58, and C59 together coordinate a divalent metal cation. The interval 29–60 is alpha; sequence KKSCCPCCPSGCTKCASGCVCKGKTCDTSCCQ.

It belongs to the metallothionein superfamily. Type 1 family.

Its function is as follows. Metallothioneins have a high content of cysteine residues that bind various heavy metals. The sequence is that of Metallothionein A (mta) from Trematomus bernacchii (Emerald rockcod).